We begin with the raw amino-acid sequence, 416 residues long: Phosphoglycerate kinase (416 aa).

Residues 24–26, R40, 63–66, R126, and R166 each bind substrate; these read DLN and HLGR. ATP contacts are provided by residues K216, G304, E335, and 364 to 367; that span reads GGDS.

This sequence belongs to the phosphoglycerate kinase family. Monomer.

It is found in the cytoplasm. It carries out the reaction (2R)-3-phosphoglycerate + ATP = (2R)-3-phospho-glyceroyl phosphate + ADP. It participates in carbohydrate degradation; glycolysis; pyruvate from D-glyceraldehyde 3-phosphate: step 2/5. This chain is Phosphoglycerate kinase, found in Mycobacterium leprae (strain Br4923).